Consider the following 1882-residue polypeptide: uncharacterized protein (1882 aa).

A helical transmembrane segment spans residues 16 to 36; the sequence is FFLLFGIIFVLFSIIFLETSI. 4 disordered regions span residues 103-129, 220-306, 492-513, and 658-698; these read DFGSDSEKKDSTTKSSDNNPRKGDVND, FPGD…ESET, VALAQQQQDKQESSADDGVKDP, and QTDE…TKST. A compositionally biased stretch (basic and acidic residues) spans 221–239; that stretch reads PGDKGKGEDKKTTKKKSEI. A compositionally biased stretch (polar residues) spans 240–249; sequence KQASSATTVL. Basic and acidic residues-rich tracts occupy residues 259-275, 284-294, and 500-511; these read TDAKETTNNEEPKKDSN, NKDKVWFKSDE, and DKQESSADDGVK. Low complexity predominate over residues 667–698; it reads AKTTQGTTDSLTQLADASSSSSSSSTGDTKST. The next 4 helical transmembrane spans lie at 987-1007, 1037-1057, 1080-1100, and 1154-1174; these read ASVVIAAFLSILALYLTILLI, VFAGIVALASSFFGVLFAFLL, WISFFGSMLLIFVIFQFISWI, and LFTYVGLSSIALLLIGIAGTI. Disordered stretches follow at residues 1233–1253 and 1572–1598; these read DQIQQQQQQQQQQGNDKEHPY and KDGQSTDDSGGTSSGGGSCGGGSTSST. The segment covering 1234 to 1245 has biased composition (low complexity); it reads QIQQQQQQQQQQ. Positions 1583 to 1594 are enriched in gly residues; that stretch reads TSSGGGSCGGGS. The next 4 helical transmembrane spans lie at 1759-1779, 1807-1827, 1828-1848, and 1851-1871; these read FLLGTIIPFIFITCVVLGISM, FFIPAFVLSLLISIAILAGLL, VGVQALVFGVAQVFLTNVFEF, and YMVGIVLFGATIFVIGSYFWI.

It belongs to the ABC-4 integral membrane protein family.

The protein resides in the cell membrane. This is an uncharacterized protein from Mycoplasma pneumoniae (strain ATCC 29342 / M129 / Subtype 1) (Mycoplasmoides pneumoniae).